The sequence spans 291 residues: N-acetylmannosamine kinase (291 aa).

Residues 5–12 and 132–139 each bind ATP; these read AIDIGGTK and GVGGGVVC. Zn(2+) contacts are provided by H156, C166, C168, and C173.

Belongs to the ROK (NagC/XylR) family. NanK subfamily. Homodimer.

It carries out the reaction an N-acyl-D-mannosamine + ATP = an N-acyl-D-mannosamine 6-phosphate + ADP + H(+). It participates in amino-sugar metabolism; N-acetylneuraminate degradation; D-fructose 6-phosphate from N-acetylneuraminate: step 2/5. Catalyzes the phosphorylation of N-acetylmannosamine (ManNAc) to ManNAc-6-P. The sequence is that of N-acetylmannosamine kinase from Salmonella typhi.